We begin with the raw amino-acid sequence, 183 residues long: MINVEIIKNYSKWREHKQINKALIKKITQKTLSQFDNFSEIKQFELSILLTNNEEILTLNKQFRNIEKATNVLSFPANELNWQDLRFSGNEIASSNKPIILENLGDSDYMHLGDIAFCYDVIYNESYEQQKTFENHFIHLLIHSILHLIGFDHQNDTETKIMENLEIEILAHFGISSPYLLIK.

The Zn(2+) site is built by His-143, His-147, and His-153.

The protein belongs to the endoribonuclease YbeY family. Zn(2+) serves as cofactor.

The protein localises to the cytoplasm. Single strand-specific metallo-endoribonuclease involved in late-stage 70S ribosome quality control and in maturation of the 3' terminus of the 16S rRNA. The protein is Endoribonuclease YbeY of Rickettsia bellii (strain OSU 85-389).